We begin with the raw amino-acid sequence, 193 residues long: Probable nicotinate-nucleotide adenylyltransferase (193 aa).

The protein belongs to the NadD family.

The enzyme catalyses nicotinate beta-D-ribonucleotide + ATP + H(+) = deamido-NAD(+) + diphosphate. The protein operates within cofactor biosynthesis; NAD(+) biosynthesis; deamido-NAD(+) from nicotinate D-ribonucleotide: step 1/1. Functionally, catalyzes the reversible adenylation of nicotinate mononucleotide (NaMN) to nicotinic acid adenine dinucleotide (NaAD). The protein is Probable nicotinate-nucleotide adenylyltransferase of Coprothermobacter proteolyticus (strain ATCC 35245 / DSM 5265 / OCM 4 / BT).